The sequence spans 175 residues: Ribosome-binding factor A (175 aa).

Residues Lys-131–Asp-175 are disordered. Residues Leu-162–Asp-175 show a composition bias toward acidic residues.

The protein belongs to the RbfA family. In terms of assembly, monomer. Binds 30S ribosomal subunits, but not 50S ribosomal subunits or 70S ribosomes.

Its subcellular location is the cytoplasm. Functionally, one of several proteins that assist in the late maturation steps of the functional core of the 30S ribosomal subunit. Associates with free 30S ribosomal subunits (but not with 30S subunits that are part of 70S ribosomes or polysomes). Required for efficient processing of 16S rRNA. May interact with the 5'-terminal helix region of 16S rRNA. The protein is Ribosome-binding factor A of Mycobacterium ulcerans (strain Agy99).